We begin with the raw amino-acid sequence, 362 residues long: Heat-inducible transcription repressor HrcA (362 aa).

The protein belongs to the HrcA family.

Functionally, negative regulator of class I heat shock genes (grpE-dnaK-dnaJ and groELS operons). Prevents heat-shock induction of these operons. The chain is Heat-inducible transcription repressor HrcA from Bradyrhizobium sp. (strain BTAi1 / ATCC BAA-1182).